The following is a 338-amino-acid chain: Ketol-acid reductoisomerase (NADP(+)) (338 aa).

Residues 1 to 181 (MNVFYDKDAD…GGGRAGIIET (181 aa)) form the KARI N-terminal Rossmann domain. NADP(+) is bound by residues 24–27 (YGSQ), Arg47, and Ser52. Residue His107 is part of the active site. Gly133 provides a ligand contact to NADP(+). The 146-residue stretch at 182 to 327 (NFREETETDL…AKLRAMMPWI (146 aa)) folds into the KARI C-terminal knotted domain. Mg(2+)-binding residues include Asp190, Glu194, Glu226, and Glu230. Position 251 (Ser251) interacts with substrate.

It belongs to the ketol-acid reductoisomerase family. Requires Mg(2+) as cofactor.

It catalyses the reaction (2R)-2,3-dihydroxy-3-methylbutanoate + NADP(+) = (2S)-2-acetolactate + NADPH + H(+). It carries out the reaction (2R,3R)-2,3-dihydroxy-3-methylpentanoate + NADP(+) = (S)-2-ethyl-2-hydroxy-3-oxobutanoate + NADPH + H(+). It functions in the pathway amino-acid biosynthesis; L-isoleucine biosynthesis; L-isoleucine from 2-oxobutanoate: step 2/4. Its pathway is amino-acid biosynthesis; L-valine biosynthesis; L-valine from pyruvate: step 2/4. Involved in the biosynthesis of branched-chain amino acids (BCAA). Catalyzes an alkyl-migration followed by a ketol-acid reduction of (S)-2-acetolactate (S2AL) to yield (R)-2,3-dihydroxy-isovalerate. In the isomerase reaction, S2AL is rearranged via a Mg-dependent methyl migration to produce 3-hydroxy-3-methyl-2-ketobutyrate (HMKB). In the reductase reaction, this 2-ketoacid undergoes a metal-dependent reduction by NADPH to yield (R)-2,3-dihydroxy-isovalerate. The protein is Ketol-acid reductoisomerase (NADP(+)) of Burkholderia multivorans (strain ATCC 17616 / 249).